Consider the following 322-residue polypeptide: HPr kinase/phosphorylase (322 aa).

Residues histidine 146 and lysine 167 contribute to the active site. 161 to 168 (GDSGLGKS) serves as a coordination point for ATP. Residue serine 168 coordinates Mg(2+). Residue aspartate 185 is the Proton acceptor; for phosphorylation activity. Proton donor; for dephosphorylation activity of the active site. The interval 209–218 (LEVRGLGLLD) is important for the catalytic mechanism of both phosphorylation and dephosphorylation. Glutamate 210 contacts Mg(2+). Arginine 250 is a catalytic residue. The segment at 271–276 (QVAAGR) is important for the catalytic mechanism of dephosphorylation.

The protein belongs to the HPrK/P family. Homohexamer. Mg(2+) serves as cofactor.

It carries out the reaction [HPr protein]-L-serine + ATP = [HPr protein]-O-phospho-L-serine + ADP + H(+). The enzyme catalyses [HPr protein]-O-phospho-L-serine + phosphate + H(+) = [HPr protein]-L-serine + diphosphate. Its function is as follows. Catalyzes the ATP- as well as the pyrophosphate-dependent phosphorylation of a specific serine residue in HPr, a phosphocarrier protein of the phosphoenolpyruvate-dependent sugar phosphotransferase system (PTS). HprK/P also catalyzes the pyrophosphate-producing, inorganic phosphate-dependent dephosphorylation (phosphorolysis) of seryl-phosphorylated HPr (P-Ser-HPr). The sequence is that of HPr kinase/phosphorylase from Burkholderia cenocepacia (strain HI2424).